The chain runs to 419 residues: uncharacterized protein (419 aa).

11 consecutive transmembrane segments (helical) span residues methionine 1 to leucine 21, valine 24 to aspartate 44, isoleucine 66 to threonine 86, alanine 101 to isoleucine 121, serine 174 to alanine 194, asparagine 216 to leucine 236, isoleucine 242 to glycine 262, proline 280 to leucine 300, serine 311 to alanine 331, leucine 349 to phenylalanine 369, and isoleucine 396 to valine 416.

This sequence belongs to the CitM (TC 2.A.11) transporter family.

It is found in the cell membrane. This is an uncharacterized protein from Haemophilus influenzae (strain ATCC 51907 / DSM 11121 / KW20 / Rd).